Reading from the N-terminus, the 565-residue chain is Proline--tRNA ligase (565 aa).

The protein belongs to the class-II aminoacyl-tRNA synthetase family. ProS type 1 subfamily. Homodimer.

The protein resides in the cytoplasm. The catalysed reaction is tRNA(Pro) + L-proline + ATP = L-prolyl-tRNA(Pro) + AMP + diphosphate. In terms of biological role, catalyzes the attachment of proline to tRNA(Pro) in a two-step reaction: proline is first activated by ATP to form Pro-AMP and then transferred to the acceptor end of tRNA(Pro). As ProRS can inadvertently accommodate and process non-cognate amino acids such as alanine and cysteine, to avoid such errors it has two additional distinct editing activities against alanine. One activity is designated as 'pretransfer' editing and involves the tRNA(Pro)-independent hydrolysis of activated Ala-AMP. The other activity is designated 'posttransfer' editing and involves deacylation of mischarged Ala-tRNA(Pro). The misacylated Cys-tRNA(Pro) is not edited by ProRS. This chain is Proline--tRNA ligase, found in Bacillus pumilus (strain SAFR-032).